The sequence spans 400 residues: Imidazolonepropionase (400 aa).

2 residues coordinate Fe(3+): H70 and H72. 2 residues coordinate Zn(2+): H70 and H72. Residues R79, Y142, and H175 each contribute to the 4-imidazolone-5-propanoate site. Residue Y142 coordinates N-formimidoyl-L-glutamate. Residue H239 coordinates Fe(3+). Residue H239 coordinates Zn(2+). Q242 contributes to the 4-imidazolone-5-propanoate binding site. D314 is a Fe(3+) binding site. D314 provides a ligand contact to Zn(2+). N-formimidoyl-L-glutamate is bound by residues N316 and G318. Residue T319 participates in 4-imidazolone-5-propanoate binding.

The protein belongs to the metallo-dependent hydrolases superfamily. HutI family. Requires Zn(2+) as cofactor. Fe(3+) serves as cofactor.

Its subcellular location is the cytoplasm. It catalyses the reaction 4-imidazolone-5-propanoate + H2O = N-formimidoyl-L-glutamate. It participates in amino-acid degradation; L-histidine degradation into L-glutamate; N-formimidoyl-L-glutamate from L-histidine: step 3/3. Catalyzes the hydrolytic cleavage of the carbon-nitrogen bond in imidazolone-5-propanoate to yield N-formimidoyl-L-glutamate. It is the third step in the universal histidine degradation pathway. This Methylobacterium nodulans (strain LMG 21967 / CNCM I-2342 / ORS 2060) protein is Imidazolonepropionase.